The following is a 145-amino-acid chain: D-aminoacyl-tRNA deacylase (145 aa).

Positions 137-138 match the Gly-cisPro motif, important for rejection of L-amino acids motif; the sequence is GP.

It belongs to the DTD family. Homodimer.

Its subcellular location is the cytoplasm. It carries out the reaction glycyl-tRNA(Ala) + H2O = tRNA(Ala) + glycine + H(+). It catalyses the reaction a D-aminoacyl-tRNA + H2O = a tRNA + a D-alpha-amino acid + H(+). In terms of biological role, an aminoacyl-tRNA editing enzyme that deacylates mischarged D-aminoacyl-tRNAs. Also deacylates mischarged glycyl-tRNA(Ala), protecting cells against glycine mischarging by AlaRS. Acts via tRNA-based rather than protein-based catalysis; rejects L-amino acids rather than detecting D-amino acids in the active site. By recycling D-aminoacyl-tRNA to D-amino acids and free tRNA molecules, this enzyme counteracts the toxicity associated with the formation of D-aminoacyl-tRNA entities in vivo and helps enforce protein L-homochirality. In Deinococcus radiodurans (strain ATCC 13939 / DSM 20539 / JCM 16871 / CCUG 27074 / LMG 4051 / NBRC 15346 / NCIMB 9279 / VKM B-1422 / R1), this protein is D-aminoacyl-tRNA deacylase.